The sequence spans 257 residues: Lysine-rich coiled-coil protein 1 (257 aa).

Positions 145 to 257 are disordered; sequence NTSAHQASYK…MLWDQSILGF (113 aa). Positions 152–162 are enriched in basic residues; it reads SYKHIHQKRKR. 4 stretches are compositionally biased toward basic and acidic residues: residues 163-176, 183-193, 200-212, and 219-228; these read HTEE…EERP, ACEEIDLDKYK, TEAE…TEKL, and RSRDVASKKE. Residues 210–248 adopt a coiled-coil conformation; that stretch reads EKLKNRKEKRSRDVASKKEERKRRKEKKEQGQERTEEEM.

This is Lysine-rich coiled-coil protein 1 (KRCC1) from Bos taurus (Bovine).